The sequence spans 137 residues: ATP synthase epsilon chain (137 aa).

This sequence belongs to the ATPase epsilon chain family. As to quaternary structure, F-type ATPases have 2 components, CF(1) - the catalytic core - and CF(0) - the membrane proton channel. CF(1) has five subunits: alpha(3), beta(3), gamma(1), delta(1), epsilon(1). CF(0) has three main subunits: a, b and c.

The protein resides in the cell membrane. Produces ATP from ADP in the presence of a proton gradient across the membrane. The chain is ATP synthase epsilon chain from Caldicellulosiruptor bescii (strain ATCC BAA-1888 / DSM 6725 / KCTC 15123 / Z-1320) (Anaerocellum thermophilum).